A 394-amino-acid chain; its full sequence is Argininosuccinate synthase (394 aa).

Residues 7–15 and alanine 34 each bind ATP; that span reads AYSGGLDTS. L-citrulline-binding residues include tyrosine 85 and serine 90. Glycine 115 contributes to the ATP binding site. L-aspartate-binding residues include threonine 117, asparagine 121, and aspartate 122. Residue asparagine 121 participates in L-citrulline binding. L-citrulline is bound by residues arginine 125, serine 176, serine 185, glutamate 261, and tyrosine 273.

It belongs to the argininosuccinate synthase family. Type 1 subfamily. Homotetramer.

It localises to the cytoplasm. The catalysed reaction is L-citrulline + L-aspartate + ATP = 2-(N(omega)-L-arginino)succinate + AMP + diphosphate + H(+). It participates in amino-acid biosynthesis; L-arginine biosynthesis; L-arginine from L-ornithine and carbamoyl phosphate: step 2/3. In Ehrlichia ruminantium (strain Gardel), this protein is Argininosuccinate synthase.